A 386-amino-acid chain; its full sequence is Mannitol-1-phosphate 5-dehydrogenase (386 aa).

3-14 is a binding site for NAD(+); the sequence is AVHFGAGNIGRG.

This sequence belongs to the mannitol dehydrogenase family.

It catalyses the reaction D-mannitol 1-phosphate + NAD(+) = beta-D-fructose 6-phosphate + NADH + H(+). This chain is Mannitol-1-phosphate 5-dehydrogenase, found in Brevibacillus brevis (strain 47 / JCM 6285 / NBRC 100599).